Reading from the N-terminus, the 190-residue chain is RNA pyrophosphohydrolase (190 aa).

Positions 6–149 (GYRPNVGIIL…KRDVYTQALN (144 aa)) constitute a Nudix hydrolase domain. The Nudix box motif lies at 38–59 (GGIKYGESPVQAMYRELHEEVG). The disordered stretch occupies residues 167 to 190 (QRVHGPRSTDSPSSETDGHAHIAG).

Belongs to the Nudix hydrolase family. RppH subfamily. A divalent metal cation is required as a cofactor.

Accelerates the degradation of transcripts by removing pyrophosphate from the 5'-end of triphosphorylated RNA, leading to a more labile monophosphorylated state that can stimulate subsequent ribonuclease cleavage. The polypeptide is RNA pyrophosphohydrolase (Bordetella pertussis (strain Tohama I / ATCC BAA-589 / NCTC 13251)).